Reading from the N-terminus, the 318-residue chain is NADH-ubiquinone oxidoreductase chain 1 (318 aa).

The next 8 helical transmembrane spans lie at 3-23 (TTNILCLIIPILLAVAFLTLV), 69-89 (FMFTIAPTLALTLALTLWIPL), 100-120 (LGILFILAVSSLAVYSILWSG), 135-155 (AVAQTISYEVTLAIILLSLVL), 171-191 (HMWLVLPTWPLTMMWFTSTLA), 213-233 (VEYAAGPFALFFMAEYANIIL), 253-273 (ELHTINFITKTLILTTMFLWI), and 294-314 (LPLTLAMCMWHVSTSISFASI).

This sequence belongs to the complex I subunit 1 family.

Its subcellular location is the mitochondrion inner membrane. It catalyses the reaction a ubiquinone + NADH + 5 H(+)(in) = a ubiquinol + NAD(+) + 4 H(+)(out). Functionally, core subunit of the mitochondrial membrane respiratory chain NADH dehydrogenase (Complex I) that is believed to belong to the minimal assembly required for catalysis. Complex I functions in the transfer of electrons from NADH to the respiratory chain. The immediate electron acceptor for the enzyme is believed to be ubiquinone. The protein is NADH-ubiquinone oxidoreductase chain 1 (MT-ND1) of Choloepus didactylus (Southern two-toed sloth).